We begin with the raw amino-acid sequence, 427 residues long: MTLVTAGGAWTGPGCWHEVKDEESSSEQSISIAVSHVNTSKAGLPAQTALPCDICGPILKDILHLDEHQGTHHGLKLHTCGACGRQFWFSANLHQYQKCYSIEQPLRRDKSEASIVKNCTVSKEPHPSEKPFTCKEEQKNFQATLGGCQQKAIHSKRKTHRSTESGDAFHGEQMHYKCSECGKAFSRKDTLVQHQRIHSGEKPYECSECGKAFSRKATLVQHQRIHTGERPYECSECGKTFSRKDNLTQHKRIHTGEMPYKCNECGKYFSHHSNLIVHQRVHNGARPYKCSDCGKVFRHKSTLVQHESIHTGENPYDCSDCGKSFGHKYTLIKHQRIHTESKPFECIECGKFFSRSSDYIAHQRVHTGERPFVCSKCGKDFIRTSHLVRHQRVHTGERPYECSECGKAYSLSSHLNRHQKVHTAGRL.

Lys20 participates in a covalent cross-link: Glycyl lysine isopeptide (Lys-Gly) (interchain with G-Cter in SUMO2). The segment at 50 to 72 (LPCDICGPILKDILHLDEHQGTH) adopts a C2H2-type 1 zinc-finger fold. The C2H2-type 2; degenerate zinc finger occupies 78–100 (HTCGACGRQFWFSANLHQYQKCY). Glycyl lysine isopeptide (Lys-Gly) (interchain with G-Cter in SUMO2) cross-links involve residues Lys135 and Lys139. C2H2-type zinc fingers lie at residues 176-198 (YKCS…QRIH), 204-226 (YECS…QRIH), 232-254 (YECS…KRIH), 260-282 (YKCN…QRVH), 288-310 (YKCS…ESIH), 316-338 (YDCS…QRIH), 344-366 (FECI…QRVH), 372-394 (FVCS…QRVH), and 400-422 (YECS…QKVH).

It belongs to the krueppel C2H2-type zinc-finger protein family.

It localises to the nucleus. Its function is as follows. May be involved in transcriptional regulation. This chain is Zinc finger protein 134 (ZNF134), found in Homo sapiens (Human).